We begin with the raw amino-acid sequence, 282 residues long: Shikimate dehydrogenase (NADP(+)) (282 aa).

Residues S16–S18 and T63 each bind shikimate. Catalysis depends on K67, which acts as the Proton acceptor. Residues N88 and D103 each coordinate shikimate. Residues G128–A132 and L219 each bind NADP(+). Y221 lines the shikimate pocket. G243 is an NADP(+) binding site.

Belongs to the shikimate dehydrogenase family. Homodimer.

The enzyme catalyses shikimate + NADP(+) = 3-dehydroshikimate + NADPH + H(+). It functions in the pathway metabolic intermediate biosynthesis; chorismate biosynthesis; chorismate from D-erythrose 4-phosphate and phosphoenolpyruvate: step 4/7. Involved in the biosynthesis of the chorismate, which leads to the biosynthesis of aromatic amino acids. Catalyzes the reversible NADPH linked reduction of 3-dehydroshikimate (DHSA) to yield shikimate (SA). In Xylella fastidiosa (strain M12), this protein is Shikimate dehydrogenase (NADP(+)).